Consider the following 302-residue polypeptide: Putative gluconeogenesis factor (302 aa).

It belongs to the gluconeogenesis factor family.

It is found in the cytoplasm. In terms of biological role, required for morphogenesis under gluconeogenic growth conditions. The chain is Putative gluconeogenesis factor (ybhK) from Escherichia coli O157:H7.